The primary structure comprises 98 residues: Citrate lyase acyl carrier protein (98 aa).

Ser-14 is subject to O-(phosphoribosyl dephospho-coenzyme A)serine.

This sequence belongs to the CitD family. As to quaternary structure, oligomer with a subunit composition of (alpha,beta,gamma)6.

Its subcellular location is the cytoplasm. Its function is as follows. Covalent carrier of the coenzyme of citrate lyase. The protein is Citrate lyase acyl carrier protein of Citrobacter koseri (strain ATCC BAA-895 / CDC 4225-83 / SGSC4696).